We begin with the raw amino-acid sequence, 205 residues long: Holliday junction branch migration complex subunit RuvA (205 aa).

The domain I stretch occupies residues 1–64 (MIGHIQGVLT…EDAQLLYGFI (64 aa)). Positions 65-143 (SASERSLFRL…DWQPSTPFTD (79 aa)) are domain II. The disordered stretch occupies residues 136–157 (QPSTPFTDRAPLDSQGMDAREH). The flexible linker stretch occupies residues 144–156 (RAPLDSQGMDARE). The segment at 157 to 205 (HPADARTDAISALQSLGYKENQAEKALQKVYSAEHNSETLIRLALKQLS) is domain III.

This sequence belongs to the RuvA family. Homotetramer. Forms an RuvA(8)-RuvB(12)-Holliday junction (HJ) complex. HJ DNA is sandwiched between 2 RuvA tetramers; dsDNA enters through RuvA and exits via RuvB. An RuvB hexamer assembles on each DNA strand where it exits the tetramer. Each RuvB hexamer is contacted by two RuvA subunits (via domain III) on 2 adjacent RuvB subunits; this complex drives branch migration. In the full resolvosome a probable DNA-RuvA(4)-RuvB(12)-RuvC(2) complex forms which resolves the HJ.

It localises to the cytoplasm. Its function is as follows. The RuvA-RuvB-RuvC complex processes Holliday junction (HJ) DNA during genetic recombination and DNA repair, while the RuvA-RuvB complex plays an important role in the rescue of blocked DNA replication forks via replication fork reversal (RFR). RuvA specifically binds to HJ cruciform DNA, conferring on it an open structure. The RuvB hexamer acts as an ATP-dependent pump, pulling dsDNA into and through the RuvAB complex. HJ branch migration allows RuvC to scan DNA until it finds its consensus sequence, where it cleaves and resolves the cruciform DNA. The chain is Holliday junction branch migration complex subunit RuvA from Idiomarina loihiensis (strain ATCC BAA-735 / DSM 15497 / L2-TR).